A 594-amino-acid polypeptide reads, in one-letter code: CTP synthase (594 aa).

An amidoligase domain region spans residues 1 to 272 (MARPKNVKYV…DLRVLKKLGL (272 aa)). Ser18 contacts CTP. Residue Ser18 coordinates UTP. 19 to 24 (SLGKGI) contacts ATP. Tyr59 provides a ligand contact to L-glutamine. Asp76 is a binding site for ATP. Mg(2+) contacts are provided by Asp76 and Glu146. Residues 153 to 155 (DIE), 193 to 198 (KTKPTQ), and Lys229 each bind CTP. Residues 193–198 (KTKPTQ) and Lys229 contribute to the UTP site. In terms of domain architecture, Glutamine amidotransferase type-1 spans 299–543 (TIVVCGKYTE…VGAAKSYAAV (245 aa)). Gly363 serves as a coordination point for L-glutamine. Cys390 functions as the Nucleophile; for glutamine hydrolysis in the catalytic mechanism. L-glutamine contacts are provided by residues 391 to 394 (LGMQ), Glu414, and Arg471. Active-site residues include His516 and Glu518. The span at 562–571 (AEAYAAYSEE) shows a compositional bias: low complexity. The segment at 562–594 (AEAYAAYSEESSAESKSFFPDNGGHDEERDSGQ) is disordered. Residues 584 to 594 (GGHDEERDSGQ) show a composition bias toward basic and acidic residues.

This sequence belongs to the CTP synthase family. As to quaternary structure, homotetramer.

The enzyme catalyses UTP + L-glutamine + ATP + H2O = CTP + L-glutamate + ADP + phosphate + 2 H(+). It carries out the reaction L-glutamine + H2O = L-glutamate + NH4(+). The catalysed reaction is UTP + NH4(+) + ATP = CTP + ADP + phosphate + 2 H(+). It functions in the pathway pyrimidine metabolism; CTP biosynthesis via de novo pathway; CTP from UDP: step 2/2. Allosterically activated by GTP, when glutamine is the substrate; GTP has no effect on the reaction when ammonia is the substrate. The allosteric effector GTP functions by stabilizing the protein conformation that binds the tetrahedral intermediate(s) formed during glutamine hydrolysis. Inhibited by the product CTP, via allosteric rather than competitive inhibition. Its function is as follows. Catalyzes the ATP-dependent amination of UTP to CTP with either L-glutamine or ammonia as the source of nitrogen. Regulates intracellular CTP levels through interactions with the four ribonucleotide triphosphates. This chain is CTP synthase, found in Chlorobium phaeovibrioides (strain DSM 265 / 1930) (Prosthecochloris vibrioformis (strain DSM 265)).